The sequence spans 349 residues: Nicotinate-nucleotide--dimethylbenzimidazole phosphoribosyltransferase (349 aa).

Catalysis depends on glutamate 313, which acts as the Proton acceptor.

It belongs to the CobT family.

The enzyme catalyses 5,6-dimethylbenzimidazole + nicotinate beta-D-ribonucleotide = alpha-ribazole 5'-phosphate + nicotinate + H(+). The protein operates within nucleoside biosynthesis; alpha-ribazole biosynthesis; alpha-ribazole from 5,6-dimethylbenzimidazole: step 1/2. Catalyzes the synthesis of alpha-ribazole-5'-phosphate from nicotinate mononucleotide (NAMN) and 5,6-dimethylbenzimidazole (DMB). This is Nicotinate-nucleotide--dimethylbenzimidazole phosphoribosyltransferase from Mycobacterium avium (strain 104).